The sequence spans 345 residues: MNSELFSPYTIKDVTLKNRIVMSPMCMYSSENEDGQVTNFHLIHYGTRAAGQVGLVMIEATAVLPEGRISNKDLGIWDDSLIEGLHKTTTFIHDNGAKAAIQLAHAGRKAELETDALAPSAIPFNETMKIPVEMSIQQIKNTILAFQQAAVRSKQAGFDVIEIHGAHGYLINEFLSPLSNKRTDEYGGSPEKRYRFLREIIDSINEVWNGPLFVRISANDYHPDGLTVQDYIQYTKWMKEQGVDLIDCSSGAVVPARIDVYPGYQVQYAKHIKEHANIATGAVGLITTGAQAEQILTNNEADLIFIGRELLRNPYFPRIAANELGFELEEPYQYERAPGKISTNK.

An FMN-binding site is contributed by S23 to C26. Y28 contributes to the substrate binding site. FMN contacts are provided by A60 and Q102. H164 to H167 contacts substrate. FMN contacts are provided by residues R215 and G307–R308.

The protein belongs to the NADH:flavin oxidoreductase/NADH oxidase family. NamA subfamily. Homotetramer. FMN serves as cofactor.

The enzyme catalyses A + NADPH + H(+) = AH2 + NADP(+). Catalyzes the reduction of the double bond of an array of alpha,beta-unsaturated aldehydes and ketones. It also reduces the nitro group of nitroester and nitroaromatic compounds. It could have a role in detoxification processes. In Bacillus thuringiensis subsp. konkukian (strain 97-27), this protein is NADPH dehydrogenase.